The primary structure comprises 521 residues: Phosphoenolpyruvate carboxykinase (ATP) (521 aa).

Residues Arg-52, Tyr-186, and Lys-192 each contribute to the substrate site. ATP is bound by residues Lys-192, His-211, and 227-235 (GLSGTGKTT). Mn(2+) contacts are provided by Lys-192 and His-211. Asp-248 is a Mn(2+) binding site. ATP is bound by residues Glu-276, Arg-313, 432-433 (RI), and Thr-438. Arg-313 is a binding site for substrate.

It belongs to the phosphoenolpyruvate carboxykinase (ATP) family. Mn(2+) serves as cofactor.

Its subcellular location is the cytoplasm. It carries out the reaction oxaloacetate + ATP = phosphoenolpyruvate + ADP + CO2. The protein operates within carbohydrate biosynthesis; gluconeogenesis. In terms of biological role, involved in the gluconeogenesis. Catalyzes the conversion of oxaloacetate (OAA) to phosphoenolpyruvate (PEP) through direct phosphoryl transfer between the nucleoside triphosphate and OAA. The protein is Phosphoenolpyruvate carboxykinase (ATP) of Caldanaerobacter subterraneus subsp. tengcongensis (strain DSM 15242 / JCM 11007 / NBRC 100824 / MB4) (Thermoanaerobacter tengcongensis).